We begin with the raw amino-acid sequence, 373 residues long: Chaperone protein DnaJ (373 aa).

Residues 4-68 (NYYQILGVSK…QKRAAYDRLG (65 aa)) form the J domain. The CR-type zinc finger occupies 136-214 (GIEKNINFSS…CHGMGRYHKQ (79 aa)). Zn(2+) contacts are provided by Cys-149, Cys-152, Cys-166, Cys-169, Cys-188, Cys-191, Cys-202, and Cys-205. 4 CXXCXGXG motif repeats span residues 149–156 (CNTCHGSG), 166–173 (CDACSGVG), 188–195 (CHKCQGNG), and 202–209 (CKKCHGMG).

The protein belongs to the DnaJ family. As to quaternary structure, homodimer. Zn(2+) serves as cofactor.

It is found in the cytoplasm. Participates actively in the response to hyperosmotic and heat shock by preventing the aggregation of stress-denatured proteins and by disaggregating proteins, also in an autonomous, DnaK-independent fashion. Unfolded proteins bind initially to DnaJ; upon interaction with the DnaJ-bound protein, DnaK hydrolyzes its bound ATP, resulting in the formation of a stable complex. GrpE releases ADP from DnaK; ATP binding to DnaK triggers the release of the substrate protein, thus completing the reaction cycle. Several rounds of ATP-dependent interactions between DnaJ, DnaK and GrpE are required for fully efficient folding. Also involved, together with DnaK and GrpE, in the DNA replication of plasmids through activation of initiation proteins. The protein is Chaperone protein DnaJ of Rickettsia rickettsii (strain Sheila Smith).